The primary structure comprises 233 residues: Glycolipid transfer protein 3 (233 aa).

Residues D79, N83, W126, and H165 each contribute to the a ganglioside GM3 (d18:1(4E)) site.

Belongs to the GLTP family.

In terms of biological role, may be involved in glycolipids transfer. The protein is Glycolipid transfer protein 3 of Arabidopsis thaliana (Mouse-ear cress).